We begin with the raw amino-acid sequence, 325 residues long: Serpentine receptor class gamma-16 (325 aa).

Transmembrane regions (helical) follow at residues 25 to 45 (FCLY…ILLI), 65 to 85 (VVSL…MFIP), 87 to 107 (LCPL…MYYW), 144 to 164 (LAVT…WNLL), 187 to 207 (WASL…FTII), 232 to 252 (FVSL…LIFV), and 264 to 284 (LLFQ…IIML).

Belongs to the nematode receptor-like protein srg family.

The protein resides in the membrane. The chain is Serpentine receptor class gamma-16 (srg-16) from Caenorhabditis elegans.